Reading from the N-terminus, the 216-residue chain is Peptide methionine sulfoxide reductase MsrA (216 aa).

The active site involves Cys-58.

It belongs to the MsrA Met sulfoxide reductase family.

The catalysed reaction is L-methionyl-[protein] + [thioredoxin]-disulfide + H2O = L-methionyl-(S)-S-oxide-[protein] + [thioredoxin]-dithiol. It carries out the reaction [thioredoxin]-disulfide + L-methionine + H2O = L-methionine (S)-S-oxide + [thioredoxin]-dithiol. Has an important function as a repair enzyme for proteins that have been inactivated by oxidation. Catalyzes the reversible oxidation-reduction of methionine sulfoxide in proteins to methionine. The protein is Peptide methionine sulfoxide reductase MsrA of Azotobacter vinelandii (strain DJ / ATCC BAA-1303).